The sequence spans 164 residues: Transcription elongation factor GreA (164 aa).

Residues 50–76 (YHAAREEQGQQEARIRQLQELLNNAKV) adopt a coiled-coil conformation.

Belongs to the GreA/GreB family.

Its function is as follows. Necessary for efficient RNA polymerase transcription elongation past template-encoded arresting sites. The arresting sites in DNA have the property of trapping a certain fraction of elongating RNA polymerases that pass through, resulting in locked ternary complexes. Cleavage of the nascent transcript by cleavage factors such as GreA or GreB allows the resumption of elongation from the new 3'terminus. GreA releases sequences of 2 to 3 nucleotides. The polypeptide is Transcription elongation factor GreA (Mycobacteroides abscessus (strain ATCC 19977 / DSM 44196 / CCUG 20993 / CIP 104536 / JCM 13569 / NCTC 13031 / TMC 1543 / L948) (Mycobacterium abscessus)).